Here is a 294-residue protein sequence, read N- to C-terminus: 4-hydroxy-tetrahydrodipicolinate synthase (294 aa).

T47 contacts pyruvate. The active-site Proton donor/acceptor is Y135. The active-site Schiff-base intermediate with substrate is the K163. Residue V205 coordinates pyruvate.

It belongs to the DapA family. In terms of assembly, homotetramer; dimer of dimers.

The protein resides in the cytoplasm. It carries out the reaction L-aspartate 4-semialdehyde + pyruvate = (2S,4S)-4-hydroxy-2,3,4,5-tetrahydrodipicolinate + H2O + H(+). Its pathway is amino-acid biosynthesis; L-lysine biosynthesis via DAP pathway; (S)-tetrahydrodipicolinate from L-aspartate: step 3/4. Its function is as follows. Catalyzes the condensation of (S)-aspartate-beta-semialdehyde [(S)-ASA] and pyruvate to 4-hydroxy-tetrahydrodipicolinate (HTPA). The polypeptide is 4-hydroxy-tetrahydrodipicolinate synthase (Rickettsia bellii (strain OSU 85-389)).